Here is a 598-residue protein sequence, read N- to C-terminus: NADH-ubiquinone oxidoreductase chain 5 (598 aa).

16 helical membrane passes run 1-21 (MLEL…IFLF), 28-48 (FAES…ILLM), 81-101 (CFFV…FYYM), 115-135 (GLFL…QLLI), 171-191 (GDIG…DWSF), 193-213 (GLYA…LAAA), 233-253 (TPVS…FLLI), 265-285 (IQLM…ICAL), 293-312 (VVAF…VGAG), 323-343 (MHAF…HGLQ), 362-382 (SVCF…AGFF), 399-421 (WAVG…LLYF), 454-474 (VIAG…CLSL), 480-500 (LAAV…VNLL), 509-529 (IPEL…HKLI), and 576-596 (LIKM…GIMI).

Belongs to the complex I subunit 5 family.

The protein resides in the mitochondrion inner membrane. It carries out the reaction a ubiquinone + NADH + 5 H(+)(in) = a ubiquinol + NAD(+) + 4 H(+)(out). Functionally, core subunit of the mitochondrial membrane respiratory chain NADH dehydrogenase (Complex I) that is believed to belong to the minimal assembly required for catalysis. Complex I functions in the transfer of electrons from NADH to the respiratory chain. The immediate electron acceptor for the enzyme is believed to be ubiquinone. The protein is NADH-ubiquinone oxidoreductase chain 5 (ND5) of Branchiostoma lanceolatum (Common lancelet).